A 261-amino-acid chain; its full sequence is Ribonuclease HII (261 aa).

Residues 71 to 260 (HYIAGVDEVG…LHKYRHNTLL (190 aa)) form the RNase H type-2 domain. The a divalent metal cation site is built by Asp77, Glu78, and Asp169.

This sequence belongs to the RNase HII family. Requires Mn(2+) as cofactor. Mg(2+) serves as cofactor.

Its subcellular location is the cytoplasm. The enzyme catalyses Endonucleolytic cleavage to 5'-phosphomonoester.. In terms of biological role, endonuclease that specifically degrades the RNA of RNA-DNA hybrids. In Oceanobacillus iheyensis (strain DSM 14371 / CIP 107618 / JCM 11309 / KCTC 3954 / HTE831), this protein is Ribonuclease HII.